The chain runs to 418 residues: Arginine deiminase (418 aa).

Cys-406 (amidino-cysteine intermediate) is an active-site residue.

Belongs to the arginine deiminase family.

The protein resides in the cytoplasm. The catalysed reaction is L-arginine + H2O = L-citrulline + NH4(+). It participates in amino-acid degradation; L-arginine degradation via ADI pathway; carbamoyl phosphate from L-arginine: step 1/2. The protein is Arginine deiminase of Lentilactobacillus hilgardii (Lactobacillus hilgardii).